Consider the following 179-residue polypeptide: Adenine phosphoribosyltransferase (179 aa).

This sequence belongs to the purine/pyrimidine phosphoribosyltransferase family. As to quaternary structure, homodimer.

Its subcellular location is the cytoplasm. It carries out the reaction AMP + diphosphate = 5-phospho-alpha-D-ribose 1-diphosphate + adenine. It functions in the pathway purine metabolism; AMP biosynthesis via salvage pathway; AMP from adenine: step 1/1. Catalyzes a salvage reaction resulting in the formation of AMP, that is energically less costly than de novo synthesis. The sequence is that of Adenine phosphoribosyltransferase from Azorhizobium caulinodans (strain ATCC 43989 / DSM 5975 / JCM 20966 / LMG 6465 / NBRC 14845 / NCIMB 13405 / ORS 571).